The sequence spans 298 residues: 3'-5' exonuclease crn-4 (298 aa).

Positions 12–192 (LILDFETTSD…DDCLNIATIL (181 aa)) constitute an Exonuclease domain. Mg(2+) contacts are provided by D15, E17, and D184. Positions 210, 260, 263, and 270 each coordinate Zn(2+).

In terms of assembly, homodimer (via C-terminus). Interacts with crn-5; interaction promotes the DNase activity of crn-4. Interacts with cps-6, crn-1 and cyn-13. The cofactor is Mg(2+).

Its activity is regulated as follows. Exonuclease activity is inhibited in vitro by pontacyl violet 6R (PV6R), p-chloromercuriphenyl sulfonate (PCMPS), 5,5'-dithiobis(2-nitrobenzoic acid) (DTNB), aurintricarboxylic acid (ATA), 2-morpholin-4-ylethanesulfonate (MES), 4-[(4,6-dichloro-1,3,5-triazin-2-yl)amino]-2-(3-hydroxy-6-oxoxanthen-9-yl)benzoic acid (DR396) and fmoc-d-Cha-OH (FDCO). Interaction with ssRNA is reduced in vitro by PV6R. Possesses 3'-&gt;5' exoribonuclease activity in digestion of DNA and RNA. Cleaves nucleic acid substrates with efficiencies in the following order: single-stranded RNA (ssRNA) &gt; double-stranded DNA (dsDNA) &gt; single-stranded DNA (ssDNA). Involved in apoptotic DNA degradation. This Caenorhabditis elegans protein is 3'-5' exonuclease crn-4 (crn-4).